A 569-amino-acid polypeptide reads, in one-letter code: CUE domain-containing protein 5 (569 aa).

A CUE domain is found at 17–60; the sequence is MAEKARATLKEAFPNTDDAIIRAVLAASGYKLEPAFNALLGLSD. Disordered stretches follow at residues 67–139, 175–275, and 311–569; these read MEQA…DDYS, DGEE…SSSA, and EELE…GKET. Over residues 79–100 the composition is skewed to basic and acidic residues; that stretch reads AAHDDPVQRQLEEDERCARELA. Residues 104–113 show a composition bias toward basic residues; that stretch reads NSHRPERRRK. Residues 234–249 show a composition bias toward basic and acidic residues; sequence SDPHMLNEKDFERLRL. Residues 250–274 show a composition bias toward low complexity; sequence ESSSSPMMRRSSLNSNRRSVESSSS. Residues 329–340 are compositionally biased toward basic and acidic residues; that stretch reads VVVEKKPDESRK. Residues 347–364 show a composition bias toward polar residues; the sequence is ETVSEEQMGSSNAKSKVL. Basic and acidic residues-rich tracts occupy residues 367-381, 399-500, and 507-558; these read EPKD…KTET, ISEK…KETD, and KEEK…KIEE.

It localises to the cytoplasm. The chain is CUE domain-containing protein 5 from Schizosaccharomyces pombe (strain 972 / ATCC 24843) (Fission yeast).